Here is a 113-residue protein sequence, read N- to C-terminus: DNA-directed RNA polymerase subunit omega (113 aa).

It belongs to the RNA polymerase subunit omega family. In terms of assembly, the RNAP catalytic core consists of 2 alpha, 1 beta, 1 beta' and 1 omega subunit. When a sigma factor is associated with the core the holoenzyme is formed, which can initiate transcription.

The catalysed reaction is RNA(n) + a ribonucleoside 5'-triphosphate = RNA(n+1) + diphosphate. Promotes RNA polymerase assembly. Latches the N- and C-terminal regions of the beta' subunit thereby facilitating its interaction with the beta and alpha subunits. This chain is DNA-directed RNA polymerase subunit omega, found in Rhizorhabdus wittichii (strain DSM 6014 / CCUG 31198 / JCM 15750 / NBRC 105917 / EY 4224 / RW1) (Sphingomonas wittichii).